The chain runs to 1004 residues: Ephrin type-A receptor 8 (1004 aa).

Residues 1–26 (MAPARARLSPALWVVTAAAAATCVSA) form the signal peptide. The Extracellular segment spans residues 27–541 (GRGEVNLLDT…KPRPRYDTRT (515 aa)). Positions 30–208 (EVNLLDTSTI…YYKKCPAMVR (179 aa)) constitute an Eph LBD domain. Fibronectin type-III domains follow at residues 327 to 437 (PPSA…TNQA) and 438 to 533 (APSQ…TGKP). N339, N406, and N431 each carry an N-linked (GlcNAc...) asparagine glycan. The helical transmembrane segment at 542 to 562 (IVWICLTLITGLVVLLLLLIC) threads the bilayer. The segment at 563 to 569 (KKRHCGY) is mediates interaction with ANKS1A and ANKS1B. The Cytoplasmic segment spans residues 563 to 1004 (KKRHCGYSKA…SSTQGPRRHL (442 aa)). The tract at residues 588–643 (APPPVFLPLNHPPGKFPETQFSAEPHTYEEPGRAGRSFTREIEASRIHIEKIIGSG) is mediates interaction with PIK3CG and required for endocytosis. At Y615 the chain carries Phosphotyrosine; by autocatalysis. Residues 634 to 895 (IHIEKIIGSG…HVVSVLDALV (262 aa)) enclose the Protein kinase domain. ATP-binding positions include 640-648 (IGSGESGEV) and K666. D759 (proton acceptor) is an active-site residue. Y838 carries the post-translational modification Phosphotyrosine; by autocatalysis. The region spanning 929–993 (NGDLTVGDWL…LGSIQTMRAQ (65 aa)) is the SAM domain. The short motif at 1002–1004 (RHL) is the PDZ-binding element.

The protein belongs to the protein kinase superfamily. Tyr protein kinase family. Ephrin receptor subfamily. As to quaternary structure, heterotetramer upon binding of the ligand. The heterotetramer is composed of an ephrin dimer and a receptor dimer. Oligomerization is probably required to induce biological responses. May also form heterodimers with other ephrin receptors. Interacts with FYN; possible downstream effector of EPHA8 in regulation of cell adhesion. Interacts with PIK3CG; regulates integrin-mediated cell adhesion to substrate. Interacts with TIAM1; regulates clathrin-mediated endocytosis of EPHA8. Interacts with ANKS1A and ANKS1B; EPHA8 kinase activity-independent but stimulated by EPHA8 ubiquitination. In terms of processing, phosphorylated. Phosphorylation is stimulated upon binding of its ligands including EFNA2, EFNA3 and EFNA5. Autophosphorylation on Tyr-615 is critical for association with FYN. Autophosphorylation on Tyr-838 modulates tyrosine kinase activity. Ubiquitinated. Ubiquitination by CBL regulates the receptor stability and activity through proteasomal degradation. ANKS1A prevents ubiquitination and degradation. Specifically expressed in the central nervous system.

The protein localises to the cell membrane. The protein resides in the cell projection. It localises to the early endosome membrane. The enzyme catalyses L-tyrosyl-[protein] + ATP = O-phospho-L-tyrosyl-[protein] + ADP + H(+). In terms of biological role, receptor tyrosine kinase which binds promiscuously GPI-anchored ephrin-A family ligands residing on adjacent cells, leading to contact-dependent bidirectional signaling into neighboring cells. The signaling pathway downstream of the receptor is referred to as forward signaling while the signaling pathway downstream of the ephrin ligand is referred to as reverse signaling. The GPI-anchored ephrin-A EFNA2, EFNA3, and EFNA5 are able to activate EPHA8 through phosphorylation. With EFNA5 may regulate integrin-mediated cell adhesion and migration on fibronectin substrate but also neurite outgrowth. During development of the nervous system also plays a role in axon guidance. Downstream effectors of the EPHA8 signaling pathway include FYN which promotes cell adhesion upon activation by EPHA8 and the MAP kinases in the stimulation of neurite outgrowth. The protein is Ephrin type-A receptor 8 (Epha8) of Mus musculus (Mouse).